The primary structure comprises 26 residues: Coenzyme PQQ synthesis protein A (26 aa).

Residues 16–20 (EINMY) constitute a cross-link (pyrroloquinoline quinone (Glu-Tyr)).

Belongs to the PqqA family.

The protein operates within cofactor biosynthesis; pyrroloquinoline quinone biosynthesis. In terms of biological role, required for coenzyme pyrroloquinoline quinone (PQQ) biosynthesis. PQQ is probably formed by cross-linking a specific glutamate to a specific tyrosine residue and excising these residues from the peptide. This chain is Coenzyme PQQ synthesis protein A, found in Cereibacter sphaeroides (strain ATCC 17029 / ATH 2.4.9) (Rhodobacter sphaeroides).